Consider the following 331-residue polypeptide: Ketol-acid reductoisomerase (NADP(+)) (331 aa).

A KARI N-terminal Rossmann domain is found at 2–182 (AQLFYDSDAD…GGTRAGILET (181 aa)). Residues 25–28 (YGSQ), serine 51, serine 53, and 83–86 (DEFQ) contribute to the NADP(+) site. The active site involves histidine 108. Position 134 (glycine 134) interacts with NADP(+). The region spanning 183–328 (NFKEETETDL…KGLRSMFSWL (146 aa)) is the KARI C-terminal knotted domain. Residues aspartate 191, glutamate 195, glutamate 227, and glutamate 231 each coordinate Mg(2+). Serine 252 provides a ligand contact to substrate.

This sequence belongs to the ketol-acid reductoisomerase family. It depends on Mg(2+) as a cofactor.

The enzyme catalyses (2R)-2,3-dihydroxy-3-methylbutanoate + NADP(+) = (2S)-2-acetolactate + NADPH + H(+). It catalyses the reaction (2R,3R)-2,3-dihydroxy-3-methylpentanoate + NADP(+) = (S)-2-ethyl-2-hydroxy-3-oxobutanoate + NADPH + H(+). It functions in the pathway amino-acid biosynthesis; L-isoleucine biosynthesis; L-isoleucine from 2-oxobutanoate: step 2/4. The protein operates within amino-acid biosynthesis; L-valine biosynthesis; L-valine from pyruvate: step 2/4. Functionally, involved in the biosynthesis of branched-chain amino acids (BCAA). Catalyzes an alkyl-migration followed by a ketol-acid reduction of (S)-2-acetolactate (S2AL) to yield (R)-2,3-dihydroxy-isovalerate. In the isomerase reaction, S2AL is rearranged via a Mg-dependent methyl migration to produce 3-hydroxy-3-methyl-2-ketobutyrate (HMKB). In the reductase reaction, this 2-ketoacid undergoes a metal-dependent reduction by NADPH to yield (R)-2,3-dihydroxy-isovalerate. In Parasynechococcus marenigrum (strain WH8102), this protein is Ketol-acid reductoisomerase (NADP(+)).